Reading from the N-terminus, the 261-residue chain is Putative ketoacyl reductase (261 aa).

Residues T15, S16, I18, R38, G39, D63, V64, N90, Y157, K161, V190, and T192 each coordinate NADP(+). Residue Y157 is the Proton acceptor of the active site.

It belongs to the short-chain dehydrogenases/reductases (SDR) family. Homotetramer.

The protein operates within antibiotic biosynthesis; actinorhodin biosynthesis. In Streptomyces coelicolor (strain ATCC BAA-471 / A3(2) / M145), this protein is Putative ketoacyl reductase (actIII).